The following is a 518-amino-acid chain: Bifunctional methyltransferase (518 aa).

The tract at residues 1 to 300 is hemK; it reads MQYSIKQILN…SHNRVIEISP (300 aa). Residues 1-302 form an RF MTase region; that stretch reads MQYSIKQILN…NRVIEISPIN (302 aa). S-adenosyl-L-methionine contacts are provided by residues 140-144, D163, W192, N207, E347, E372, N399, and D421; that span reads GTGSG. 207–210 provides a ligand contact to substrate; that stretch reads NPPY. Residues 301 to 518 are tRNA (guanine-N(7)-)-methyltransferase; the sequence is INLNRSYARR…MILQHALTGH (218 aa). The tract at residues 305-518 is tRNA MTase; the sequence is RSYARRIGKS…MILQHALTGH (214 aa). Residue D421 is part of the active site. Substrate-binding residues include K425 and D457.

It in the C-terminal section; belongs to the class I-like SAM-binding methyltransferase superfamily. TrmB family. This sequence in the N-terminal section; belongs to the protein N5-glutamine methyltransferase family. PrmC subfamily.

The catalysed reaction is L-glutaminyl-[peptide chain release factor] + S-adenosyl-L-methionine = N(5)-methyl-L-glutaminyl-[peptide chain release factor] + S-adenosyl-L-homocysteine + H(+). It catalyses the reaction guanosine(46) in tRNA + S-adenosyl-L-methionine = N(7)-methylguanosine(46) in tRNA + S-adenosyl-L-homocysteine. Methylates the class 1 translation termination release factors RF1/PrfA and RF2/PrfB on the glutamine residue of the universally conserved GGQ motif. Functionally, catalyzes the formation of N(7)-methylguanine at position 46 (m7G46) in tRNA. This Rickettsia typhi (strain ATCC VR-144 / Wilmington) protein is Bifunctional methyltransferase (prmC/trmB).